The chain runs to 138 residues: Large-conductance mechanosensitive channel (138 aa).

3 consecutive transmembrane segments (helical) span residues 15–35 (VDLAIGVIIGGAFGGLVNSIV), 38–58 (IIMPIIGLITGGIDFSNMFIQ), and 80–100 (GNFITLLINFLIIAWVLFLVV).

The protein belongs to the MscL family. Homopentamer.

It is found in the cell inner membrane. Channel that opens in response to stretch forces in the membrane lipid bilayer. May participate in the regulation of osmotic pressure changes within the cell. This Brucella canis (strain ATCC 23365 / NCTC 10854 / RM-666) protein is Large-conductance mechanosensitive channel.